Consider the following 514-residue polypeptide: Glutamyl-tRNA(Gln) amidotransferase subunit B, mitochondrial (514 aa).

This sequence belongs to the GatB/GatE family. GatB subfamily. In terms of assembly, subunit of the heterotrimeric GatCAB amidotransferase (AdT) complex, composed of A, B and C subunits.

It is found in the mitochondrion. It catalyses the reaction L-glutamyl-tRNA(Gln) + L-glutamine + ATP + H2O = L-glutaminyl-tRNA(Gln) + L-glutamate + ADP + phosphate + H(+). Its function is as follows. Allows the formation of correctly charged Gln-tRNA(Gln) through the transamidation of misacylated Glu-tRNA(Gln) in the mitochondria. The reaction takes place in the presence of glutamine and ATP through an activated gamma-phospho-Glu-tRNA(Gln). The protein is Glutamyl-tRNA(Gln) amidotransferase subunit B, mitochondrial of Naegleria gruberi (Amoeba).